A 343-amino-acid chain; its full sequence is Protease inhibitor Egf1.5a (343 aa).

A signal peptide spans Met1–Ala28. The TIL domain maps to Cys52–Cys104.

It belongs to the polydnaviridae EGF-like motif protein family. Interacts with host PAP1, PAP3 and SPH2.

Its function is as follows. Counteracts the host humoral immune response by inhibiting the processing and the amidolytic activity of host PAP1 and PAP3. Thereby, melanization of host hemolymph, normally producing several reactive intermediates toxic for viruses, is deregulated and proper immune response cannot occur. This chain is Protease inhibitor Egf1.5a (O1), found in Microplitis demolitor bracovirus (isolate Webb) (MdBV).